Consider the following 514-residue polypeptide: UDP-N-acetylmuramoyl-L-alanyl-D-glutamate--2,6-diaminopimelate ligase (514 aa).

T37 provides a ligand contact to UDP-N-acetyl-alpha-D-muramoyl-L-alanyl-D-glutamate. Position 125-131 (125-131) interacts with ATP; that stretch reads GTNGKTS. Residues 167 to 168, S194, Q200, and R202 each bind UDP-N-acetyl-alpha-D-muramoyl-L-alanyl-D-glutamate; that span reads TT. An N6-carboxylysine modification is found at K234. Residues R406, 430 to 433, G481, and E485 each bind meso-2,6-diaminopimelate; that span reads DNPR. The Meso-diaminopimelate recognition motif signature appears at 430-433; the sequence is DNPR.

This sequence belongs to the MurCDEF family. MurE subfamily. Mg(2+) serves as cofactor. Carboxylation is probably crucial for Mg(2+) binding and, consequently, for the gamma-phosphate positioning of ATP.

The protein localises to the cytoplasm. It catalyses the reaction UDP-N-acetyl-alpha-D-muramoyl-L-alanyl-D-glutamate + meso-2,6-diaminopimelate + ATP = UDP-N-acetyl-alpha-D-muramoyl-L-alanyl-gamma-D-glutamyl-meso-2,6-diaminopimelate + ADP + phosphate + H(+). It functions in the pathway cell wall biogenesis; peptidoglycan biosynthesis. Its function is as follows. Catalyzes the addition of meso-diaminopimelic acid to the nucleotide precursor UDP-N-acetylmuramoyl-L-alanyl-D-glutamate (UMAG) in the biosynthesis of bacterial cell-wall peptidoglycan. The chain is UDP-N-acetylmuramoyl-L-alanyl-D-glutamate--2,6-diaminopimelate ligase from Ralstonia nicotianae (strain ATCC BAA-1114 / GMI1000) (Ralstonia solanacearum).